Reading from the N-terminus, the 471-residue chain is Pancreatic lipase-related protein 2 (471 aa).

The N-terminal stretch at 1-17 (MLPSWTIGLLLLATVRG) is a signal peptide. Cysteine 21 and cysteine 27 form a disulfide bridge. An N-linked (GlcNAc...) asparagine glycan is attached at asparagine 71. Positions 93-105 (IHGFIDKGEDSWP) are required for galactolipase activity. The cysteines at positions 109 and 120 are disulfide-linked. Residue serine 171 is the Nucleophile of the active site. The Charge relay system role is filled by aspartate 195. 4 residues coordinate Ca(2+): glutamate 206, arginine 209, aspartate 211, and aspartate 214. Cysteines 256 and 280 form a disulfide. The tract at residues 257-279 (QKNTLSTIVDVDGIWEGIEDFAA) is required for galactolipase activity. Residue histidine 282 is the Charge relay system of the active site. Cystine bridges form between cysteine 304–cysteine 317 and cysteine 320–cysteine 325. N-linked (GlcNAc...) asparagine glycosylation is present at asparagine 355. Residues 359 to 471 (WRYRVSVTLA…ENILQTLNPC (113 aa)) form the PLAT domain. Cysteine 455 and cysteine 471 are oxidised to a cystine.

It belongs to the AB hydrolase superfamily. Lipase family.

The protein localises to the secreted. The protein resides in the zymogen granule membrane. Its subcellular location is the cell projection. It is found in the neuron projection. The enzyme catalyses a triacylglycerol + H2O = a diacylglycerol + a fatty acid + H(+). It catalyses the reaction a 1,2-diacyl-3-O-(beta-D-galactosyl)-sn-glycerol + 2 H2O = 3-beta-D-galactosyl-sn-glycerol + 2 a fatty acid + 2 H(+). It carries out the reaction 1,2,3-tri-(9Z-octadecenoyl)-glycerol + H2O = di-(9Z)-octadecenoylglycerol + (9Z)-octadecenoate + H(+). The catalysed reaction is di-(9Z)-octadecenoylglycerol + H2O = (9Z-octadecenoyl)-glycerol + (9Z)-octadecenoate + H(+). The enzyme catalyses (9Z-octadecenoyl)-glycerol + H2O = glycerol + (9Z)-octadecenoate + H(+). It catalyses the reaction 1-(9Z-octadecenoyl)-glycerol + H2O = glycerol + (9Z)-octadecenoate + H(+). It carries out the reaction 1,2,3-tripropanoylglycerol + H2O = dipropanoylglycerol + propanoate + H(+). The catalysed reaction is 1,2,3-tributanoylglycerol + H2O = dibutanoylglycerol + butanoate + H(+). The enzyme catalyses 1,2,3-trioctanoylglycerol + H2O = dioctanoylglycerol + octanoate + H(+). It catalyses the reaction 1,2-didecanoylglycerol + H2O = decanoylglycerol + decanoate + H(+). It carries out the reaction long chain 1,2-diacyl-3-O-beta-D-galactosyl-sn-glycerol + H2O = long chain acyl-3-O-beta-D-galactosyl-sn-glycerol + a fatty acid + H(+). The catalysed reaction is 1,2-dioctanoyl-3-O-beta-D-galactosyl-sn-glycerol + H2O = octanoyl-3-(beta-D-galactosyl)-sn-glycerol + octanoate + H(+). The enzyme catalyses 1,2-didodecanoyl-3-beta-D-galactosyl-sn-glycerol + H2O = dodecanoyl-3-beta-D-galactosyl-sn-glycerol + dodecanoate + H(+). It catalyses the reaction 1-beta-D-galactosyl-2,3-didodecanoyl-sn-glycerol + H2O = 1-beta-D-galactosyl-dodecanoyl-sn-glycerol + dodecanoate + H(+). It carries out the reaction a 1,2-diacyl-3-O-[alpha-D-galactosyl-(1-&gt;6)-beta-D-galactosyl]-sn-glycerol + H2O = acyl-3-O-[alpha-D-galactosyl-(1-&gt;6)-beta-D-galactosyl]-sn-glycerol + a fatty acid + H(+). The catalysed reaction is long chain 1,2-diacyl-3-O-[alpha-D-galactosyl-(1-&gt;6)-beta-D-galactosyl]-sn-glycerol + H2O = long chain acyl-3-O-[alpha-D-galactosyl-(1-&gt;6)-beta-D-galactosyl]-sn-glycerol + a fatty acid + H(+). The enzyme catalyses 1,2-dioctanoyl-3-O-[alpha-D-galactosyl-(1-&gt;6)-beta-D-galactosyl]-sn-glycerol + H2O = octanoyl-3-O-[alpha-D-galactosyl-(1-&gt;6)-beta-D-galactosyl]-sn-glycerol + octanoate + H(+). It catalyses the reaction 1,2-didodecanoyl-3-O-[alpha-D-galactosyl-(1-&gt;6)-beta-D-galactosyl]-sn-glycerol + H2O = dodecanoyl-3-O-[alpha-D-galactosyl-(1-&gt;6)-beta-D-galactosyl]-sn-glycerol + dodecanoate + H(+). It carries out the reaction a 1,2-diacyl-sn-glycero-3-phosphocholine + H2O = a monoacyl-sn-glycero-3-phosphocholine + a fatty acid + H(+). It participates in glycerolipid metabolism; triacylglycerol degradation. The protein operates within glycolipid metabolism. Its activity is regulated as follows. Up-regulated by CLPS in the presence of increasing concentrations of bile salts. In terms of biological role, lipase that primarily hydrolyzes triglycerides and galactosylglycerides. In neonates, may play a major role in pancreatic digestion of dietary fats such as milk fat globules enriched in long-chain triglycerides. Hydrolyzes short-, medium- and long-chain fatty acyls in triglycerides without apparent positional specificity. Can completely deacylate triacylglycerols. When the liver matures and bile salt synthesis increases, likely functions mainly as a galactolipase and monoacylglycerol lipase. Hydrolyzes monogalactosyldiglycerols (MGDG) and digalactosyldiacylglycerols (DGDG) present in a plant-based diet, releasing long-chain polyunsaturated fatty acids. Hydrolyzes medium- and long-chain fatty acyls in galactolipids. May act together with LIPF to hydrolyze partially digested triglycerides. Hydrolyzes long-chain monoglycerides with high efficiency. In cytotoxic T cells, contributes to perforin-dependent cell lysis, but is unlikely to mediate direct cytotoxicity. Also has low phospholipase activity. In neurons, required for the localization of the phospholipid 1-oleoyl-2-palmitoyl-PC (OPPC) to neurite tips through acyl chain remodeling of membrane phospholipids. The resulting OPPC-rich lipid membrane domain recruits the t-SNARE protein STX4 by selectively interacting with the STX4 transmembrane domain and this promotes surface expression of the dopamine transporter SLC6A3/DAT at neurite tips by facilitating fusion of SLC6A3-containing transport vesicles with the plasma membrane. The protein is Pancreatic lipase-related protein 2 (PNLIPRP2) of Sus scrofa (Pig).